Consider the following 462-residue polypeptide: PTS system mannitol-specific cryptic EIICB component (462 aa).

At 1-24 the chain is on the cytoplasmic side; the sequence is MENKSARAKVQAFGGFLTAMVIPN. The PTS EIIC type-2 domain occupies 13–344; the sequence is FGGFLTAMVI…LKMEKTVETE (332 aa). The chain crosses the membrane as a helical span at residues 25–46; the sequence is IGAFIAWGFITALFIPTGWLPN. Over 47-50 the chain is Periplasmic; the sequence is EHFA. A helical transmembrane segment spans residues 51–71; it reads KIVGPMITYLLPVMIGSTGGH. The Cytoplasmic segment spans residues 72–134; the sequence is LVGGKRGAVM…AGFEMVINNF (63 aa). Residues 135-156 traverse the membrane as a helical segment; the sequence is SLGIAGMLLCLLGFEVIGPAVL. The Periplasmic segment spans residues 157 to 165; sequence IANTFVKEC. Residues 166 to 186 traverse the membrane as a helical segment; the sequence is IEALVHAGYLPLLSVINEPAK. Over 187 to 273 the chain is Cytoplasmic; it reads VLFLNNAIDQ…VLMKPLTIIA (87 aa). A helical membrane pass occupies residues 274–293; it reads MIAGGMSGTWMFNLLDGGLV. At 294–313 the chain is on the periplasmic side; the sequence is AGPSPGSIFAYLALTPKGSF. A helical membrane pass occupies residues 314–335; the sequence is LATIAGVTVGTLVSFAITSLIL. At 336-462 the chain is on the cytoplasmic side; it reads KMEKTVETES…FNQLTAEHKH (127 aa). In terms of domain architecture, PTS EIIB type-2 spans 371-461; it reads KRIAFVCDAG…LFNQLTAEHK (91 aa). Cysteine 377 (phosphocysteine intermediate; for EIIB activity) is an active-site residue. Cysteine 377 carries the post-translational modification Phosphocysteine; by EIIA.

It localises to the cell inner membrane. It catalyses the reaction D-mannitol(out) + N(pros)-phospho-L-histidyl-[protein] = D-mannitol 1-phosphate(in) + L-histidyl-[protein]. Functionally, the phosphoenolpyruvate-dependent sugar phosphotransferase system (sugar PTS), a major carbohydrate active transport system, catalyzes the phosphorylation of incoming sugar substrates concomitantly with their translocation across the cell membrane. The enzyme II CmtAB PTS system is involved in D-mannitol transport. This chain is PTS system mannitol-specific cryptic EIICB component (cmtA), found in Escherichia coli O157:H7.